A 236-amino-acid chain; its full sequence is Phosphoribosylaminoimidazole-succinocarboxamide synthase (236 aa).

Belongs to the SAICAR synthetase family.

It catalyses the reaction 5-amino-1-(5-phospho-D-ribosyl)imidazole-4-carboxylate + L-aspartate + ATP = (2S)-2-[5-amino-1-(5-phospho-beta-D-ribosyl)imidazole-4-carboxamido]succinate + ADP + phosphate + 2 H(+). It functions in the pathway purine metabolism; IMP biosynthesis via de novo pathway; 5-amino-1-(5-phospho-D-ribosyl)imidazole-4-carboxamide from 5-amino-1-(5-phospho-D-ribosyl)imidazole-4-carboxylate: step 1/2. The protein is Phosphoribosylaminoimidazole-succinocarboxamide synthase (purC) of Lactococcus lactis subsp. lactis (strain IL1403) (Streptococcus lactis).